The chain runs to 223 residues: Small ribosomal subunit protein uS5 (223 aa).

The segment at 1-48 is disordered; it reads MPGRQRRDGGSGPAGQNGPNSGDNSNARGDNRGGGRDRRDGGRGGNAA. Residues 29 to 42 are compositionally biased toward basic and acidic residues; the sequence is GDNRGGGRDRRDGG. Residues 53–116 enclose the S5 DRBM domain; that stretch reads FIERVVTINR…EEARKSFFRV (64 aa).

It belongs to the universal ribosomal protein uS5 family. Part of the 30S ribosomal subunit. Contacts proteins S4 and S8.

With S4 and S12 plays an important role in translational accuracy. Functionally, located at the back of the 30S subunit body where it stabilizes the conformation of the head with respect to the body. The chain is Small ribosomal subunit protein uS5 from Rhodococcus erythropolis (strain PR4 / NBRC 100887).